Here is a 585-residue protein sequence, read N- to C-terminus: Type IV pilus assembly ATPase TfpB (585 aa).

346 to 351 (GSGKTT) is an ATP binding site. Positions 476, 479, 511, and 514 each coordinate Zn(2+).

The protein belongs to the GSP E family.

It is found in the cytoplasm. Functionally, ATPase component of the type IV pilus (T4P). Acts as a molecular motor to provide the energy that is required for biogenesis of the pilus and the extrusion of substrates generated in the cytoplasm. TfpB is required for optimal T4P extension and, consequently, efficient natural transformation. May play a role in initiating T4P extension. This chain is Type IV pilus assembly ATPase TfpB, found in Acinetobacter baylyi (strain ATCC 33305 / BD413 / ADP1).